The primary structure comprises 148 residues: Augurin (148 aa).

A signal peptide spans 1–31 (MGTSSARPAVLALAGLALLLLLCLGPGDVSG). Propeptides lie at residues 32–68 (NKLK…LKRA) and 133–148 (SREG…YDDY).

Belongs to the augurin family. In terms of tissue distribution, expressed in the brain, with expression in the choroid plexus and the ventricular ependymal cells (at protein level).

It is found in the secreted. Its subcellular location is the cytoplasm. The protein resides in the apical cell membrane. Its function is as follows. Probable hormone that may attenuate cell proliferation and induce senescence of oligodendrocyte and neural precursor cells in the central nervous system. ECRG4-induced senescence is characterized by G1 arrest, RB1 dephosphorylation and accelerated CCND1 and CCND3 proteasomal degradation. The chain is Augurin from Rattus norvegicus (Rat).